The primary structure comprises 424 residues: Serine hydroxymethyltransferase 2 (424 aa).

Residues Leu-125 and 129 to 131 (GHL) each bind (6S)-5,6,7,8-tetrahydrofolate. Residue Lys-234 is modified to N6-(pyridoxal phosphate)lysine. A (6S)-5,6,7,8-tetrahydrofolate-binding site is contributed by Glu-250.

It belongs to the SHMT family. Homodimer. Requires pyridoxal 5'-phosphate as cofactor.

The protein localises to the cytoplasm. It carries out the reaction (6R)-5,10-methylene-5,6,7,8-tetrahydrofolate + glycine + H2O = (6S)-5,6,7,8-tetrahydrofolate + L-serine. It functions in the pathway one-carbon metabolism; tetrahydrofolate interconversion. The protein operates within amino-acid biosynthesis; glycine biosynthesis; glycine from L-serine: step 1/1. Catalyzes the reversible interconversion of serine and glycine with tetrahydrofolate (THF) serving as the one-carbon carrier. This reaction serves as the major source of one-carbon groups required for the biosynthesis of purines, thymidylate, methionine, and other important biomolecules. Also exhibits THF-independent aldolase activity toward beta-hydroxyamino acids, producing glycine and aldehydes, via a retro-aldol mechanism. This Burkholderia mallei (strain ATCC 23344) protein is Serine hydroxymethyltransferase 2.